The chain runs to 313 residues: Type II methyltransferase M.NlaX (313 aa).

Residues 2 to 308 (FKIIDLFAGI…EQMKAALSAV (307 aa)) form the SAM-dependent MTase C5-type domain. Cysteine 74 is an active-site residue.

It belongs to the class I-like SAM-binding methyltransferase superfamily. C5-methyltransferase family.

The enzyme catalyses a 2'-deoxycytidine in DNA + S-adenosyl-L-methionine = a 5-methyl-2'-deoxycytidine in DNA + S-adenosyl-L-homocysteine + H(+). In terms of biological role, a methylase, recognizes the double-stranded sequence 5'-CCNGG-3' and methylates C-2 on both strands. May be the equivalent of dcm in this bacteria, or it may protect the DNA from cleavage by the putative NlaXP endonuclease. The chain is Type II methyltransferase M.NlaX (nlaXM) from Neisseria lactamica.